The chain runs to 242 residues: Putative serine/threonine-protein kinase (242 aa).

In terms of domain architecture, Protein kinase spans 49 to 242; the sequence is FSSKNKVGEG…KSDVYSFGVL (194 aa). Residues 55–63 and Lys77 each bind ATP; that span reads VGEGGCGAV. Asp177 acts as the Proton acceptor in catalysis.

The protein belongs to the protein kinase superfamily. Ser/Thr protein kinase family.

It carries out the reaction L-seryl-[protein] + ATP = O-phospho-L-seryl-[protein] + ADP + H(+). The enzyme catalyses L-threonyl-[protein] + ATP = O-phospho-L-threonyl-[protein] + ADP + H(+). In Helianthus annuus (Common sunflower), this protein is Putative serine/threonine-protein kinase.